The chain runs to 536 residues: Phosphoenolpyruvate carboxykinase (ATP) (536 aa).

Residues R61, Y195, and K201 each contribute to the substrate site. Residues K201, H220, and 236–244 (GLSGTGKTT) contribute to the ATP site. Positions 201 and 220 each coordinate Mn(2+). D257 contacts Mn(2+). ATP-binding residues include E285, R322, and T447. R322 is a binding site for substrate.

This sequence belongs to the phosphoenolpyruvate carboxykinase (ATP) family. Mn(2+) is required as a cofactor.

The protein localises to the cytoplasm. The catalysed reaction is oxaloacetate + ATP = phosphoenolpyruvate + ADP + CO2. The protein operates within carbohydrate biosynthesis; gluconeogenesis. Its function is as follows. Involved in the gluconeogenesis. Catalyzes the conversion of oxaloacetate (OAA) to phosphoenolpyruvate (PEP) through direct phosphoryl transfer between the nucleoside triphosphate and OAA. The sequence is that of Phosphoenolpyruvate carboxykinase (ATP) from Brucella anthropi (strain ATCC 49188 / DSM 6882 / CCUG 24695 / JCM 21032 / LMG 3331 / NBRC 15819 / NCTC 12168 / Alc 37) (Ochrobactrum anthropi).